Here is a 532-residue protein sequence, read N- to C-terminus: Tyrosinase (532 aa).

The signal sequence occupies residues 1-22 (MESTTVLLAASTLLLVLHASYG). Over 23-479 (QFPRACSTAQ…LEQARQIWQW (457 aa)) the chain is Lumenal, melanosome. N-linked (GlcNAc...) asparagine glycosylation is found at Asn-90, Asn-115, and Asn-165. Residues His-184, His-206, and His-215 each contribute to the Cu cation site. Asn-234 and Asn-341 each carry an N-linked (GlcNAc...) asparagine glycan. Cu cation contacts are provided by His-367 and His-371. An N-linked (GlcNAc...) asparagine glycan is attached at Asn-375. Cu cation is bound at residue His-394. Residues 480–500 (LLGAAVVGGLVTAVIATIISL) form a helical membrane-spanning segment. Over 501-532 (TCRRKRRTKTSEETRPLLMEAEDYHATYQSNL) the chain is Cytoplasmic.

It belongs to the tyrosinase family. As to quaternary structure, active tyrosinase has been found as a homodimer and homotetramer. Cu(2+) is required as a cofactor. Frog skin.

The protein resides in the melanosome membrane. It carries out the reaction 2 L-dopa + O2 = 2 L-dopaquinone + 2 H2O. It catalyses the reaction L-tyrosine + O2 = L-dopaquinone + H2O. Its activity is regulated as follows. Activated by trypsin, chymotrypsin and subtilisin. Activated by alpha-chymotrypsin, thermolysin and Pronase. Inhibited by its product L-DOPA and tyrosine. In terms of biological role, this is a copper-containing oxidase that functions in the formation of pigments such as melanins and other polyphenolic compounds. Catalyzes the initial and rate limiting step in the cascade of reactions leading to melanin production from tyrosine. In addition to hydroxylating tyrosine to DOPA (3,4-dihydroxyphenylalanine), also catalyzes the oxidation of DOPA to DOPA-quinone. This is Tyrosinase from Pelophylax lessonae (Pool frog).